We begin with the raw amino-acid sequence, 348 residues long: MAIICSFSKLLFVAICLFGHMSLSYCDFSIVGYSQDDLTSTERLIQLFNSWMLKHNKNYKNVDEKLYRFEIFKDNLKYIDERNKMINGYWLGLNEFSDLSNDEFKEKYVGSLPEDYTNQPYDEEFVNEDIVDLPESVDWRAKGAVTPVKHQGYCESCWAFSTVATVEGINKIKTGNLVELSEQELVDCDKQSYGCNRGYQSTSLQYVAQNGIHLRAKYPYIAKQQTCRANQVGGPKVKTNGVGRVQSNNEGSLLNAIAHQPVSVVVESAGRDFQNYKGGIFEGSCGTKVDHAVTAVGYGKSGGKGYILIKNSWGPGWGENGYIRIRRASGNSPGVCGVYRSSYYPIKN.

The N-terminal stretch at 1 to 18 (MAIICSFSKLLFVAICLF) is a signal peptide. A propeptide spans 19 to 132 (GHMSLSYCDF…EEFVNEDIVD (114 aa)) (activation peptide). 3 disulfides stabilise this stretch: Cys-154–Cys-195, Cys-188–Cys-227, and Cys-285–Cys-336. The active site involves Cys-157. Residues His-291 and Asn-311 contribute to the active site.

The protein belongs to the peptidase C1 family.

The catalysed reaction is Preferential cleavage: Gly-|-Xaa, in proteins and in small molecule substrates.. Its activity is regulated as follows. Not inhibited by cystatin. Functionally, thiol protease with a substrate specificity very different from the other thiol proteases. This is Papaya proteinase 4 from Carica papaya (Papaya).